Here is a 51-residue protein sequence, read N- to C-terminus: UPF0181 protein VVA0806 (51 aa).

The protein belongs to the UPF0181 family.

The sequence is that of UPF0181 protein VVA0806 from Vibrio vulnificus (strain YJ016).